The sequence spans 102 residues: Small ribosomal subunit protein uS10 (102 aa).

This sequence belongs to the universal ribosomal protein uS10 family. As to quaternary structure, part of the 30S ribosomal subunit.

Functionally, involved in the binding of tRNA to the ribosomes. This Phenylobacterium zucineum (strain HLK1) protein is Small ribosomal subunit protein uS10.